We begin with the raw amino-acid sequence, 254 residues long: 5-oxoprolinase subunit A (254 aa).

Belongs to the LamB/PxpA family. Forms a complex composed of PxpA, PxpB and PxpC.

It carries out the reaction 5-oxo-L-proline + ATP + 2 H2O = L-glutamate + ADP + phosphate + H(+). Its function is as follows. Catalyzes the cleavage of 5-oxoproline to form L-glutamate coupled to the hydrolysis of ATP to ADP and inorganic phosphate. This Acinetobacter baumannii (strain ATCC 17978 / DSM 105126 / CIP 53.77 / LMG 1025 / NCDC KC755 / 5377) protein is 5-oxoprolinase subunit A.